A 705-amino-acid polypeptide reads, in one-letter code: Translation initiation factor IF-2 (705 aa).

The segment at 40 to 124 is disordered; the sequence is DDQIKALDKK…QPAAPKEIPS (85 aa). The span at 41–58 shows a compositional bias: basic and acidic residues; it reads DQIKALDKKFKKEQKNDN. The span at 59–77 shows a compositional bias: low complexity; that stretch reads KQSTQNNHQKSNNQNQNKG. Basic residues predominate over residues 94-108; the sequence is KGNKKNNRNNKKNNK. The region spanning 207–376 is the tr-type G domain; that stretch reads ERPAVVTIMG…GLVAEVQELK (170 aa). The G1 stretch occupies residues 216-223; sequence GHVDHGKT. 216–223 serves as a coordination point for GTP; that stretch reads GHVDHGKT. Residues 241–245 form a G2 region; it reads GITQH. The G3 stretch occupies residues 262–265; sequence DTPG. Residues 262–266 and 316–319 each bind GTP; these read DTPGH and NKID. Positions 316-319 are G4; the sequence is NKID. The tract at residues 352-354 is G5; the sequence is SAL.

Belongs to the TRAFAC class translation factor GTPase superfamily. Classic translation factor GTPase family. IF-2 subfamily.

It localises to the cytoplasm. In terms of biological role, one of the essential components for the initiation of protein synthesis. Protects formylmethionyl-tRNA from spontaneous hydrolysis and promotes its binding to the 30S ribosomal subunits. Also involved in the hydrolysis of GTP during the formation of the 70S ribosomal complex. The sequence is that of Translation initiation factor IF-2 from Staphylococcus aureus (strain MSSA476).